Here is a 316-residue protein sequence, read N- to C-terminus: Rhomboid-related protein 4 (316 aa).

Residues 1-21 are Cytoplasmic-facing; it reads MQRRTRGIDTGLLLLLSQVFH. A helical transmembrane segment spans residues 22–42; the sequence is IGINNIPPVTLATLAVNVWFF. At 43–103 the chain is on the extracellular side; it reads LNPWKPLYHS…KLEKRLGSRW (61 aa). A helical transmembrane segment spans residues 104–124; it reads FAYIIATFSLLTGVVYLLLQF. The Cytoplasmic segment spans residues 125–137; that stretch reads ASAELMNQPDFKR. Residues 138 to 154 form a helical membrane-spanning segment; it reads NCAVGFSGVLFALKVLS. Residue S144 is the Nucleophile of the active site. Residues 155–182 lie on the Extracellular side of the membrane; the sequence is NHYCPGGFVNILGFPVPNRFACWAELAA. A helical transmembrane segment spans residues 183-203; sequence IHFCTPGTSFAGHLAGILVGL. H195 is an active-site residue. Residues 204–316 are Cytoplasmic-facing; sequence MYTQGPLKKI…RQRLHRFDGQ (113 aa). A ubiquitin-binding domain (UBD) region spans residues 269 to 284; it reads SEEEQLERALRASIWD. The tract at residues 301–316 is VCP/p97-interacting motif (VIM); sequence PEEEMRRQRLHRFDGQ.

Belongs to the peptidase S54 family. In terms of assembly, interacts with BIK and STEAP3. Interacts (via C-terminal domain) with VCP. Interacts with ubiquitin and ubiquitinated proteins. In terms of tissue distribution, expressed in intestine, lung, brain, kidney, epididymis and testis.

The protein localises to the endoplasmic reticulum membrane. It localises to the mitochondrion membrane. It catalyses the reaction Cleaves type-1 transmembrane domains using a catalytic dyad composed of serine and histidine that are contributed by different transmembrane domains.. With respect to regulation, inhibited by aprotinin. In terms of biological role, intramembrane-cleaving serine protease that cleaves single transmembrane or multi-pass membrane proteins in the hydrophobic plane of the membrane, luminal loops and juxtamembrane regions. Involved in regulated intramembrane proteolysis and the subsequent release of functional polypeptides from their membrane anchors. Functional component of endoplasmic reticulum-associated degradation (ERAD) for misfolded membrane proteins. Required for the degradation process of some specific misfolded endoplasmic reticulum (ER) luminal proteins. Participates in the transfer of misfolded proteins from the ER to the cytosol, where they are destroyed by the proteasome in a ubiquitin-dependent manner. Functions in BIK, MPZ, PKD1, PTCRA, RHO, STEAP3 and TRAC processing. Involved in the regulation of exosomal secretion; inhibits the TSAP6-mediated secretion pathway. Involved in the regulation of apoptosis; modulates BIK-mediated apoptotic activity. Also plays a role in the regulation of spermatogenesis; inhibits apoptotic activity in spermatogonia. In Rattus norvegicus (Rat), this protein is Rhomboid-related protein 4 (Rhbdd1).